A 705-amino-acid polypeptide reads, in one-letter code: Lethal(3)malignant brain tumor-like protein 2 (705 aa).

Positions 1–84 (MEKPRSIEET…GTPRSLDGSG (84 aa)) are disordered. S13 is modified (phosphoserine). The span at 15-25 (PMEEEEDDDLE) shows a compositional bias: acidic residues. Positions 38 to 49 (SSVGSESSSYLE) are enriched in low complexity. Residues 50–60 (ESSEAENEDRE) show a composition bias toward acidic residues. S67 bears the Phosphoserine mark. T76 carries the phosphothreonine modification. The FCS-type zinc-finger motif lies at 81–116 (DGSGSEPAVCEMCGIVGTREAFFSKTKRFCSVSCSR). Zn(2+) contacts are provided by C90, C93, C110, and C114. MBT repeat units lie at residues 179–283 (FDWG…LVPP), 291–391 (TDWK…IKMS), 397–500 (MAHH…LTPP), and 508–604 (FNWE…LQPP). A Phosphoserine modification is found at S338. A Glycyl lysine isopeptide (Lys-Gly) (interchain with G-Cter in SUMO2) cross-link involves residue K405. The segment at 608–665 (EPATPLKAKEATKKKKKQFGKKRKRIPPTKTRPLRQGSKKPLLEDDPQGARKISSEPV) is disordered. A compositionally biased stretch (basic residues) spans 619 to 634 (TKKKKKQFGKKRKRIP). Glycyl lysine isopeptide (Lys-Gly) (interchain with G-Cter in SUMO2) cross-links involve residues K647, K659, and K675. The segment at 680–705 (DVASPDKASSPELPVSVENIKQETDD) is disordered. Phosphoserine occurs at positions 683, 688, and 689. K700 participates in a covalent cross-link: Glycyl lysine isopeptide (Lys-Gly) (interchain with G-Cter in SUMO1); alternate. K700 is covalently cross-linked (Glycyl lysine isopeptide (Lys-Gly) (interchain with G-Cter in SUMO2); alternate).

As to quaternary structure, part of the E2F6.com-1 complex in G0 phase composed of E2F6, MGA, MAX, TFDP1, CBX3, BAT8, EUHMTASE1, RING1, RNF2, MBLR, BAT8 and YAF2.

It localises to the nucleus. In terms of biological role, putative Polycomb group (PcG) protein. PcG proteins maintain the transcriptionally repressive state of genes, probably via a modification of chromatin, rendering it heritably changed in its expressibility. Its association with a chromatin-remodeling complex suggests that it may contribute to prevent expression of genes that trigger the cell into mitosis. Binds to monomethylated and dimethylated 'Lys-20' on histone H4. Binds histone H3 peptides that are monomethylated or dimethylated on 'Lys-4', 'Lys-9' or 'Lys-27'. In Homo sapiens (Human), this protein is Lethal(3)malignant brain tumor-like protein 2 (L3MBTL2).